Consider the following 77-residue polypeptide: Acyl carrier protein (77 aa).

Positions 2-77 (ADTLSRITKI…DVVEYIEGRQ (76 aa)) constitute a Carrier domain. Position 37 is an O-(pantetheine 4'-phosphoryl)serine (Ser37).

This sequence belongs to the acyl carrier protein (ACP) family. In terms of processing, 4'-phosphopantetheine is transferred from CoA to a specific serine of apo-ACP by AcpS. This modification is essential for activity because fatty acids are bound in thioester linkage to the sulfhydryl of the prosthetic group.

The protein localises to the cytoplasm. It functions in the pathway lipid metabolism; fatty acid biosynthesis. Its function is as follows. Carrier of the growing fatty acid chain in fatty acid biosynthesis. The polypeptide is Acyl carrier protein (Halalkalibacterium halodurans (strain ATCC BAA-125 / DSM 18197 / FERM 7344 / JCM 9153 / C-125) (Bacillus halodurans)).